Reading from the N-terminus, the 307-residue chain is Homoserine O-acetyltransferase (307 aa).

Cys-142 serves as the catalytic Acyl-thioester intermediate. Substrate-binding residues include Lys-163 and Ser-192. The active-site Proton acceptor is the His-235. Residue Glu-237 is part of the active site. Position 249 (Arg-249) interacts with substrate.

It belongs to the MetA family.

It localises to the cytoplasm. It catalyses the reaction L-homoserine + acetyl-CoA = O-acetyl-L-homoserine + CoA. It functions in the pathway amino-acid biosynthesis; L-methionine biosynthesis via de novo pathway; O-acetyl-L-homoserine from L-homoserine: step 1/1. In terms of biological role, transfers an acetyl group from acetyl-CoA to L-homoserine, forming acetyl-L-homoserine. In Desulfitobacterium hafniense (strain DSM 10664 / DCB-2), this protein is Homoserine O-acetyltransferase.